The chain runs to 464 residues: Glutamate--tRNA ligase (464 aa).

The 'HIGH' region motif lies at 12-22 (PSPTGYLHIGG). Positions 254 to 258 (KLSKR) match the 'KMSKS' region motif. Residue Lys-257 coordinates ATP.

It belongs to the class-I aminoacyl-tRNA synthetase family. Glutamate--tRNA ligase type 1 subfamily. In terms of assembly, monomer.

It is found in the cytoplasm. The enzyme catalyses tRNA(Glu) + L-glutamate + ATP = L-glutamyl-tRNA(Glu) + AMP + diphosphate. Functionally, catalyzes the attachment of glutamate to tRNA(Glu) in a two-step reaction: glutamate is first activated by ATP to form Glu-AMP and then transferred to the acceptor end of tRNA(Glu). The sequence is that of Glutamate--tRNA ligase from Mycoplasma mobile (strain ATCC 43663 / 163K / NCTC 11711) (Mesomycoplasma mobile).